Here is a 129-residue protein sequence, read N- to C-terminus: SPbeta prophage-derived protein NrdI (129 aa).

Belongs to the NrdI family.

Probably involved in ribonucleotide reductase function. This Bacillus subtilis (strain 168) protein is SPbeta prophage-derived protein NrdI (nrdIB).